Consider the following 425-residue polypeptide: tRNA(Ile)-lysidine synthase (425 aa).

27–32 (SGGLDS) serves as a coordination point for ATP.

Belongs to the tRNA(Ile)-lysidine synthase family.

Its subcellular location is the cytoplasm. The enzyme catalyses cytidine(34) in tRNA(Ile2) + L-lysine + ATP = lysidine(34) in tRNA(Ile2) + AMP + diphosphate + H(+). Ligates lysine onto the cytidine present at position 34 of the AUA codon-specific tRNA(Ile) that contains the anticodon CAU, in an ATP-dependent manner. Cytidine is converted to lysidine, thus changing the amino acid specificity of the tRNA from methionine to isoleucine. In Streptococcus pneumoniae (strain 70585), this protein is tRNA(Ile)-lysidine synthase.